Here is a 488-residue protein sequence, read N- to C-terminus: MTKVFALGWLLKINLMKTLYSLRRFYHVETPFNTTVGVGGRDIESTGFAWWSGNARLINVSGKLLGAHVAHAGIMVFWTGAMTLFEVAHFVPEKPLYEQGFILIPHLATLGWGVGPGGEIFNTYPYFVVGVVHLISSAVLGFGGLYHSLIGPDTLEESFPFFGYDWRDKNKMTTILGIHLVLLGIGAFLLVIKALFIGGVYDTWAPGGGDVRFVSNPTLNPLVIFGYVLKSPFGGDGWIVSVNNMEDLVGGHVWIGIICIAGGIWHILTKPFAWARRAFVWSGEAYLSYSLGALSIMGLTASNFVWYNNTAYPSEFYGPTGPEASQAQAFTFLVRDQRLGANVASSQGPTGLGKYLMRSPSGEIIFGGETMRFWDLRAPWVEPLRGPNGLDLNKIKNDIQPWQERRAAEYMTHAPLGSLNSVGGVATEINSVNYVSPRSWLTTSHSFLGFFLFIGHLWHAGRARAAAAGFEKGINRENEPVLSMRPLD.

The propeptide occupies 1 to 29 (MTKVFALGWLLKINLMKTLYSLRRFYHVE). Helical transmembrane passes span 84 to 108 (LFEV…PHLA), 149 to 170 (LIGP…RDKN), 193 to 215 (KALF…RFVS), 270 to 290 (KPFA…LSYS), and 306 to 327 (WYNN…ASQA). Glu382 is a [CaMn4O5] cluster binding site. Residues 462–486 (RARAAAAGFEKGINRENEPVLSMRP) traverse the membrane as a helical segment.

This sequence belongs to the PsbB/PsbC family. PsbC subfamily. As to quaternary structure, PSII is composed of 1 copy each of membrane proteins PsbA, PsbB, PsbC, PsbD, PsbE, PsbF, PsbH, PsbI, PsbJ, PsbK, PsbL, PsbM, PsbT, PsbX, PsbY, PsbZ, Psb30/Ycf12, at least 3 peripheral proteins of the oxygen-evolving complex and a large number of cofactors. It forms dimeric complexes. The cofactor is Binds multiple chlorophylls and provides some of the ligands for the Ca-4Mn-5O cluster of the oxygen-evolving complex. It may also provide a ligand for a Cl- that is required for oxygen evolution. PSII binds additional chlorophylls, carotenoids and specific lipids..

The protein resides in the plastid. It is found in the chloroplast thylakoid membrane. Functionally, one of the components of the core complex of photosystem II (PSII). It binds chlorophyll and helps catalyze the primary light-induced photochemical processes of PSII. PSII is a light-driven water:plastoquinone oxidoreductase, using light energy to abstract electrons from H(2)O, generating O(2) and a proton gradient subsequently used for ATP formation. This Pyropia yezoensis (Susabi-nori) protein is Photosystem II CP43 reaction center protein.